Consider the following 218-residue polypeptide: Small ribosomal subunit protein uS3 (218 aa).

The 69-residue stretch at 38 to 106 (IREYINKRLQ…RVHINIVEIK (69 aa)) folds into the KH type-2 domain.

The protein belongs to the universal ribosomal protein uS3 family. As to quaternary structure, part of the 30S ribosomal subunit. Forms a tight complex with proteins S10 and S14.

Functionally, binds the lower part of the 30S subunit head. Binds mRNA in the 70S ribosome, positioning it for translation. The sequence is that of Small ribosomal subunit protein uS3 from Geobacillus sp. (strain WCH70).